Here is a 285-residue protein sequence, read N- to C-terminus: tRNA (guanine-N(7)-)-methyltransferase (285 aa).

S-adenosyl-L-methionine-binding positions include Gly-102, 125-126, 160-161, and Cys-180; these read EI and NA. Residue Asp-183 is part of the active site. 258–260 is a binding site for S-adenosyl-L-methionine; the sequence is TEE.

It belongs to the class I-like SAM-binding methyltransferase superfamily. TrmB family. In terms of assembly, forms a complex with TRM82.

It localises to the nucleus. The catalysed reaction is guanosine(46) in tRNA + S-adenosyl-L-methionine = N(7)-methylguanosine(46) in tRNA + S-adenosyl-L-homocysteine. It participates in tRNA modification; N(7)-methylguanine-tRNA biosynthesis. Catalyzes the formation of N(7)-methylguanine at position 46 (m7G46) in tRNA. This chain is tRNA (guanine-N(7)-)-methyltransferase, found in Candida glabrata (strain ATCC 2001 / BCRC 20586 / JCM 3761 / NBRC 0622 / NRRL Y-65 / CBS 138) (Yeast).